A 157-amino-acid polypeptide reads, in one-letter code: Baculoviral IAP repeat-containing protein 5.2-B (157 aa).

The stretch at 31–101 is one BIR repeat; the sequence is RLRTFSNWPF…KHSPSCLFIA (71 aa). Thr47 carries the phosphothreonine; by CDK1 modification. Residues Cys70, Cys73, His90, and Cys97 each coordinate Zn(2+).

It belongs to the IAP family. In terms of assembly, component of the CPC at least composed of survivin/birc5, incenp, cdca8/borealin and/or cdca9/dasra-A, and aurkb/aurora-B. Interacts directly with incenp (via N-terminus). Interacts with rxra; the interaction is stronger in the absence of 9-cis retinoic acids. Ubiquitination is required for centrosome-targeting. Exhibits strong and homogeneous expression in developing oocytes. In embryos, expressed in the animal hemisphere from one-cell to yolk plug stages, and highly expressed in the future brain and dorsal region of the neural tube at the neurula stage and early tail-bud stage. At tadpole stages, expression is restricted at a low level to the head region.

Its subcellular location is the cytoplasm. It is found in the nucleus. The protein resides in the chromosome. It localises to the centromere. The protein localises to the cytoskeleton. Its subcellular location is the spindle. Functionally, does not appear to exhibit anti-apoptotic activity. Plays a role in increasing blood vessel size during development. Component of the chromosomal passenger complex (CPC), a complex that acts as a key regulator of mitosis. The CPC complex has essential functions at the centromere in ensuring correct chromosome alignment and segregation and is required for chromatin-induced microtubule stabilization and spindle assembly. This is Baculoviral IAP repeat-containing protein 5.2-B (birc5.2-b) from Xenopus laevis (African clawed frog).